Reading from the N-terminus, the 356-residue chain is Protein RecA (356 aa).

71–78 (GPESSGKT) provides a ligand contact to ATP.

The protein belongs to the RecA family.

It localises to the cytoplasm. In terms of biological role, can catalyze the hydrolysis of ATP in the presence of single-stranded DNA, the ATP-dependent uptake of single-stranded DNA by duplex DNA, and the ATP-dependent hybridization of homologous single-stranded DNAs. It interacts with LexA causing its activation and leading to its autocatalytic cleavage. The chain is Protein RecA from Synechococcus elongatus (strain ATCC 33912 / PCC 7942 / FACHB-805) (Anacystis nidulans R2).